We begin with the raw amino-acid sequence, 307 residues long: Methionyl-tRNA formyltransferase (307 aa).

Position 108–111 (108–111) interacts with (6S)-5,6,7,8-tetrahydrofolate; that stretch reads SLLP.

This sequence belongs to the Fmt family.

It catalyses the reaction L-methionyl-tRNA(fMet) + (6R)-10-formyltetrahydrofolate = N-formyl-L-methionyl-tRNA(fMet) + (6S)-5,6,7,8-tetrahydrofolate + H(+). Functionally, attaches a formyl group to the free amino group of methionyl-tRNA(fMet). The formyl group appears to play a dual role in the initiator identity of N-formylmethionyl-tRNA by promoting its recognition by IF2 and preventing the misappropriation of this tRNA by the elongation apparatus. This chain is Methionyl-tRNA formyltransferase, found in Xylella fastidiosa (strain M23).